Reading from the N-terminus, the 530-residue chain is TNF receptor-associated factor 6 (530 aa).

Residues 1–362 (MSLLNCENSC…EAQQCNGIYI (362 aa)) are interaction with TAX1BP1. An RING-type zinc finger spans residues 70-109 (CPICLMALREAVQTPCGHRFCKACIIKSIRDAGHKCPVDN). A Glycyl lysine isopeptide (Lys-Gly) (interchain with G-Cter in SUMO); alternate cross-link involves residue Lys124. Residue Lys124 forms a Glycyl lysine isopeptide (Lys-Gly) (interchain with G-Cter in ubiquitin); alternate linkage. Lys142 is covalently cross-linked (Glycyl lysine isopeptide (Lys-Gly) (interchain with G-Cter in SUMO)). TRAF-type zinc fingers lie at residues 150–202 (DHQV…EEKE) and 203–259 (IHDQ…NHLA). A coiled-coil region spans residues 299 to 356 (EDPNYEETIKQLESRLVRQDHQIRELTAKMETQSMYVGELKRTIRTLEDKVAEMEAQQ). Lys327 is covalently cross-linked (Glycyl lysine isopeptide (Lys-Gly) (interchain with G-Cter in ubiquitin)). Positions 358–507 (NGIYIWKIGN…DDTLLVRCEV (150 aa)) constitute an MATH domain. Residues 363 to 530 (WKIGNFGMHL…FQPRSTDAGV (168 aa)) form an interaction with TANK region. Lys461 participates in a covalent cross-link: Glycyl lysine isopeptide (Lys-Gly) (interchain with G-Cter in SUMO).

It belongs to the TNF receptor-associated factor family. A subfamily. Homotrimer. Homooligomer. N-terminal region is dimeric while C-terminal region is trimeric; maybe providing a mode of oligomerization. Upon IL1B treatment, forms a complex with PELI1, IRAK1, IRAK4 and MYD88; this complex recruits MAP3K7/TAK1, TAB1 and TAB2 to mediate NF-kappa-B activation. Direct binding of SMAD6 to PELI1 prevents the complex formation and hence negatively regulates IL1R-TLR signaling and eventually NF-kappa-B-mediated gene expression. Binds to TNFRSF5/CD40 and TNFRSF11A/RANK. Associates with NGFR, TNFRSF17, IRAK2, IRAK3, PELI2, PELI3, RIPK2, MAP3K1, MAP3K5, MAP3K14, CSK, TRAF, TRAF-interacting protein TRIP and TNF receptor associated protein TDP2. Binds UBE2V1. Interacts with MAVS/IPS1. Interacts with TAX1BP1; this interaction mediates deubiquitination of TRAF6 and inhibition of NF-kappa-B activation. Interacts with IL17R. Interacts with SQSTM1 bridging NTRK1 and NGFR. Forms a ternary complex with SQSTM1 and PRKCZ. Interacts with IL1RL1. Interacts with AJUBA. Interacts with TRAFD1. Interacts with TICAM2. Interacts with ZFAND5. Interacts with ARRB1 and ARRB2. Interacts with MAP3K7 and TAB1/MAP3K7IP1; during IL-1 signaling. Interacts with UBE2N. Interacts with TGFBR1, HDAC1 and RANGAP1. Interacts with AKT1, AKT2 and AKT3. Interacts (via TRAF domains) with NUMBL (via C-terminal). Interacts (via TRAF domains) with DYNC2I2 (via WD domains). Interacts with RBCK1. Interacts with LIMD1 (via LIM domains). Interacts with RSAD2/viperin. Interacts with IFIT3 (via N-terminus). Interacts (via C-terminus) with EIF2AK2/PKR (via the kinase catalytic domain). Interacts with CARD14. Interacts with CD40 and MAP3K8; the interaction is required for ERK activation. Interacts with TICAM1 and this interaction is enhanced in the presence of WDFY1. Interacts with TANK; this interaction increases in response to DNA damage. Interacts with USP10; this interaction increases in response to DNA damage. Interacts with ZC3H12A; this interaction increases in response to DNA damage and is stimulated by TANK. Interacts with WDFY3. Interacts with TRIM13. Interacts with GPS2. Interacts (via C-terminus) with SASH1. Interacts with LRRC19. Interacts with IL17RA and TRAF3IP2. Interacts with TOMM70. Interacts with AMBRA1; interaction is required to mediate 'Lys-63'-linked ubiquitination of ULK1. Interacts with CRBN; this interaction inhibits TLR4-mediated signaling by preventing TRAF6-mediated ubiquitination of ECSIT. As to quaternary structure, (Microbial infection) Interacts (via N-terminal RING domain) with Toxoplasma gondii GRA7; the interaction plays a role in GRA7-induced pro-inflammatory cytokine production in mouse macrophages. Sumoylated on Lys-124, Lys-142 and Lys-461 with SUMO1. In terms of processing, polyubiquitinated on Lys-124 by TRAF3IP2; after cell stimulation with IL17A. Polyubiquitinated; after cell stimulation with IL1B or TGFB. This ligand-induced cell stimulation leads to dimerization/oligomerization of TRAF6 molecules, followed by auto-ubiquitination which involves UBE2N and UBE2V1 and leads to TRAF6 activation. This 'Lys-63' site-specific poly-ubiquitination appears to be associated with the activation of signaling molecules. Endogenous autoubiquitination occurs only for the cytoplasmic form. Deubiquitinated by USP10 in a TANK-dependent manner, leading to the negative regulation of NF-kappa-B signaling upon DNA damage. LRRC19 induces 'Lys-63' ubiquitination. Ubiquitinated at Lys-327 by the SCF(FBXL2) complex, leading to its degradation by the proteasome. Highly expressed in brain, lung, liver, skeletal muscle, and kidney; lower expression in heart, spleen, and testis.

The protein resides in the cytoplasm. It is found in the cell cortex. Its subcellular location is the nucleus. It localises to the lipid droplet. It catalyses the reaction S-ubiquitinyl-[E2 ubiquitin-conjugating enzyme]-L-cysteine + [acceptor protein]-L-lysine = [E2 ubiquitin-conjugating enzyme]-L-cysteine + N(6)-ubiquitinyl-[acceptor protein]-L-lysine.. Its pathway is protein modification; protein ubiquitination. E3 ubiquitin ligase that, together with UBE2N and UBE2V1, mediates the synthesis of 'Lys-63'-linked-polyubiquitin chains conjugated to proteins, such as ECSIT, IKBKG, IRAK1, AKT1 and AKT2. Also mediates ubiquitination of free/unanchored polyubiquitin chain that leads to MAP3K7 activation. Leads to the activation of NF-kappa-B and JUN. Seems to also play a role in dendritic cells (DCs) maturation and/or activation. Represses c-Myb-mediated transactivation, in B-lymphocytes. Adapter protein that seems to play a role in signal transduction initiated via TNF receptor, IL-1 receptor and IL-17 receptor. Regulates osteoclast differentiation by mediating the activation of adapter protein complex 1 (AP-1) and NF-kappa-B, in response to RANK-L stimulation. Together with MAP3K8, mediates CD40 signals that activate ERK in B-cells and macrophages, and thus may play a role in the regulation of immunoglobulin production. Acts as a regulator of the JNK and NF-kappa-B signaling pathways by initiating assembly of heterotypic 'Lys-63'-/'Lys-48'-linked branched ubiquitin chains that are then recognized by TAB2: TRAF6 catalyzes initial 'Lys-63'-linked-polyubiquitin chains that are then branched via 'Lys-48'-linked polyubiquitin by HUWE1. 'Lys-63'-/'Lys-48'-linked branched ubiquitin chains protect 'Lys-63'-linkages from CYLD deubiquitination. Also participates in the TCR signaling by ubiquitinating LAT. In Mus musculus (Mouse), this protein is TNF receptor-associated factor 6 (Traf6).